The sequence spans 427 residues: Acetyl-CoA acetyltransferase, mitochondrial (427 aa).

Residues M1–Y33 constitute a mitochondrion transit peptide. Position 66 is an N6-acetyllysine; alternate (K66). At K66 the chain carries N6-succinyllysine; alternate. The residue at position 78 (K78) is an N6-succinyllysine. C126 functions as the Acyl-thioester intermediate in the catalytic mechanism. 4 positions are modified to N6-acetyllysine; alternate: K174, K181, K190, and K202. An N6-succinyllysine; alternate mark is found at K174, K181, K190, and K202. Y219 lines the CoA pocket. Residue Y219 coordinates K(+). 2 positions are modified to N6-acetyllysine; alternate: K223 and K230. N6-succinyllysine; alternate occurs at positions 223 and 230. K243 is subject to N6-succinyllysine. N6-acetyllysine is present on residues K251 and K257. Residues R258 to D260 and K263 each bind CoA. Residue K263 is modified to N6-acetyllysine; alternate. K263 is modified (N6-succinyllysine; alternate). N6-succinyllysine is present on residues K266 and K268. An N6-acetyllysine modification is found at K273. K(+)-binding residues include A280, A281, and A283. S284 contacts CoA. N6-acetyllysine is present on K338. Position 381 (V381) interacts with K(+). Residue C413 is the Proton donor/acceptor of the active site.

This sequence belongs to the thiolase-like superfamily. Thiolase family. As to quaternary structure, homotetramer. Succinylation at Lys-268, adjacent to a coenzyme A binding site. Desuccinylated by SIRT5.

It is found in the mitochondrion. It catalyses the reaction 2 acetyl-CoA = acetoacetyl-CoA + CoA. The catalysed reaction is propanoyl-CoA + acetyl-CoA = 2-methyl-3-oxobutanoyl-CoA + CoA. The protein operates within lipid metabolism; fatty acid beta-oxidation. With respect to regulation, activated by potassium ions, but not sodium ions. Its function is as follows. This is one of the enzymes that catalyzes the last step of the mitochondrial beta-oxidation pathway, an aerobic process breaking down fatty acids into acetyl-CoA. Using free coenzyme A/CoA, catalyzes the thiolytic cleavage of medium- to long-chain 3-oxoacyl-CoAs into acetyl-CoA and a fatty acyl-CoA shortened by two carbon atoms. The activity of the enzyme is reversible and it can also catalyze the condensation of two acetyl-CoA molecules into acetoacetyl-CoA. Thereby, it plays a major role in ketone body metabolism. The polypeptide is Acetyl-CoA acetyltransferase, mitochondrial (ACAT1) (Homo sapiens (Human)).